Reading from the N-terminus, the 942-residue chain is Protein translocase subunit SecA (942 aa).

Residues Q90, 108–112 (GEGKT), and D509 contribute to the ATP site.

This sequence belongs to the SecA family. Monomer and homodimer. Part of the essential Sec protein translocation apparatus which comprises SecA, SecYEG and auxiliary proteins SecDF. Other proteins may also be involved.

It localises to the cell inner membrane. It is found in the cellular thylakoid membrane. Its subcellular location is the cytoplasm. It carries out the reaction ATP + H2O + cellular proteinSide 1 = ADP + phosphate + cellular proteinSide 2.. Functionally, part of the Sec protein translocase complex. Interacts with the SecYEG preprotein conducting channel. Has a central role in coupling the hydrolysis of ATP to the transfer of proteins into and across the cell membrane, serving as an ATP-driven molecular motor driving the stepwise translocation of polypeptide chains across the membrane. Its function is as follows. Probably participates in protein translocation into and across both the cytoplasmic and thylakoid membranes in cyanobacterial cells. This chain is Protein translocase subunit SecA, found in Prochlorococcus marinus (strain NATL2A).